A 793-amino-acid polypeptide reads, in one-letter code: Netrin-B (793 aa).

An N-terminal signal peptide occupies residues M1 to G22. The region spanning K39 to A303 is the Laminin N-terminal domain. 3 N-linked (GlcNAc...) asparagine glycosylation sites follow: N103, N125, and N298. Residues S332–A378 are disordered. The segment covering P367–A378 has biased composition (low complexity). 15 disulfides stabilise this stretch: C405–C414, C407–C461, C463–C472, C475–C495, C498–C507, C500–C525, C528–C537, C540–C558, C561–C573, C563–C580, C582–C591, C594–C608, C649–C738, C652–C740, and C665–C792. Laminin EGF-like domains follow at residues C405–M497, C498–R560, and C561–K610. The disordered stretch occupies residues S420–H446. The span at D428–T437 shows a compositional bias: acidic residues. Residues C649–C792 form the NTR domain. A glycan (N-linked (GlcNAc...) asparagine) is linked at N746.

In terms of assembly, binds to unc-5 and fra receptors. At 24 hr after puparium formation (APF), detected in the most anterior (oldest) L3, L4 and L5 lamina neurons (at protein level). At 48 hr APF, expressed in all L3, L4 and L5 neurons with slightly higher expression in the L3 neurons (at protein level). At the midline of developing CNS and in different subsets of neurons, muscles, and epidermal patches.

It localises to the secreted. The protein resides in the extracellular space. The protein localises to the extracellular matrix. Its subcellular location is the cytoplasm. It is found in the perinuclear region. Functionally, netrins control guidance of CNS commissural axons and peripheral motor axons. Its association with either fra or unc-5 receptors will lead to axon attraction or repulsion, respectively. While short-range repulsion requires both fra and unc-5 receptors, long-range repulsion only requires unc-5. This chain is Netrin-B (NetB), found in Drosophila melanogaster (Fruit fly).